A 427-amino-acid chain; its full sequence is Serine--tRNA ligase (427 aa).

230–232 (TAE) is a binding site for L-serine. An ATP-binding site is contributed by 261–263 (RAE). Position 284 (E284) interacts with L-serine. Position 348–351 (348–351 (EISS)) interacts with ATP. An L-serine-binding site is contributed by S384.

Belongs to the class-II aminoacyl-tRNA synthetase family. Type-1 seryl-tRNA synthetase subfamily. In terms of assembly, homodimer. The tRNA molecule binds across the dimer.

The protein localises to the cytoplasm. It catalyses the reaction tRNA(Ser) + L-serine + ATP = L-seryl-tRNA(Ser) + AMP + diphosphate + H(+). It carries out the reaction tRNA(Sec) + L-serine + ATP = L-seryl-tRNA(Sec) + AMP + diphosphate + H(+). It participates in aminoacyl-tRNA biosynthesis; selenocysteinyl-tRNA(Sec) biosynthesis; L-seryl-tRNA(Sec) from L-serine and tRNA(Sec): step 1/1. Its function is as follows. Catalyzes the attachment of serine to tRNA(Ser). Is also able to aminoacylate tRNA(Sec) with serine, to form the misacylated tRNA L-seryl-tRNA(Sec), which will be further converted into selenocysteinyl-tRNA(Sec). In Syntrophomonas wolfei subsp. wolfei (strain DSM 2245B / Goettingen), this protein is Serine--tRNA ligase.